The primary structure comprises 1136 residues: Probable RNA-dependent RNA polymerase 2 (1136 aa).

Residues 965-989 are disordered; the sequence is SGDSGALSSSSAQPSPTYDPDLEVP. Residues 967 to 980 are compositionally biased toward low complexity; the sequence is DSGALSSSSAQPSP.

Belongs to the RdRP family.

The enzyme catalyses RNA(n) + a ribonucleoside 5'-triphosphate = RNA(n+1) + diphosphate. In terms of biological role, probably involved in the RNA silencing pathway and required for the generation of small interfering RNAs (siRNAs). The chain is Probable RNA-dependent RNA polymerase 2 (RDR2) from Oryza sativa subsp. japonica (Rice).